A 206-amino-acid chain; its full sequence is Guanylate kinase (206 aa).

The Guanylate kinase-like domain maps to 6 to 185 (GAILVLSGPS…AAKTLRIIAD (180 aa)). 13 to 20 (GPSGAGKS) serves as a coordination point for ATP.

The protein belongs to the guanylate kinase family.

The protein resides in the cytoplasm. The enzyme catalyses GMP + ATP = GDP + ADP. In terms of biological role, essential for recycling GMP and indirectly, cGMP. The sequence is that of Guanylate kinase from Sulfurimonas denitrificans (strain ATCC 33889 / DSM 1251) (Thiomicrospira denitrificans (strain ATCC 33889 / DSM 1251)).